Reading from the N-terminus, the 515-residue chain is NADH-ubiquinone oxidoreductase chain 2 (515 aa).

Transmembrane regions (helical) follow at residues 63 to 83, 250 to 270, 299 to 319, 356 to 376, and 379 to 399; these read WPIGIAAFGLCLLFLIKNSGS, VFIYGSYGATLQQIFFFCSIA, FVLVLMWNREGIQSLLIGLFI, AITFSITMFSYAGIPPLAGFC, and FYLFFAALGCGAYFLAPVGVV.

This sequence belongs to the complex I subunit 2 family.

The protein localises to the mitochondrion inner membrane. The enzyme catalyses a ubiquinone + NADH + 5 H(+)(in) = a ubiquinol + NAD(+) + 4 H(+)(out). In terms of biological role, core subunit of the mitochondrial membrane respiratory chain NADH dehydrogenase (Complex I) that is believed to belong to the minimal assembly required for catalysis. Complex I functions in the transfer of electrons from NADH to the respiratory chain. The immediate electron acceptor for the enzyme is believed to be ubiquinone. The chain is NADH-ubiquinone oxidoreductase chain 2 (ND2) from Beta vulgaris (Sugar beet).